The primary structure comprises 380 residues: Queuine tRNA-ribosyltransferase (380 aa).

Aspartate 95 (proton acceptor) is an active-site residue. Substrate is bound by residues 95–99 (DSGGF), aspartate 149, glutamine 192, and glycine 219. The tract at residues 250–256 (GVGSPDA) is RNA binding. The active-site Nucleophile is the aspartate 269. The RNA binding; important for wobble base 34 recognition stretch occupies residues 274-278 (TRIAR). The Zn(2+) site is built by cysteine 307, cysteine 309, cysteine 312, and histidine 338.

Belongs to the queuine tRNA-ribosyltransferase family. As to quaternary structure, homodimer. Within each dimer, one monomer is responsible for RNA recognition and catalysis, while the other monomer binds to the replacement base PreQ1. Zn(2+) serves as cofactor.

The enzyme catalyses 7-aminomethyl-7-carbaguanine + guanosine(34) in tRNA = 7-aminomethyl-7-carbaguanosine(34) in tRNA + guanine. It functions in the pathway tRNA modification; tRNA-queuosine biosynthesis. Catalyzes the base-exchange of a guanine (G) residue with the queuine precursor 7-aminomethyl-7-deazaguanine (PreQ1) at position 34 (anticodon wobble position) in tRNAs with GU(N) anticodons (tRNA-Asp, -Asn, -His and -Tyr). Catalysis occurs through a double-displacement mechanism. The nucleophile active site attacks the C1' of nucleotide 34 to detach the guanine base from the RNA, forming a covalent enzyme-RNA intermediate. The proton acceptor active site deprotonates the incoming PreQ1, allowing a nucleophilic attack on the C1' of the ribose to form the product. After dissociation, two additional enzymatic reactions on the tRNA convert PreQ1 to queuine (Q), resulting in the hypermodified nucleoside queuosine (7-(((4,5-cis-dihydroxy-2-cyclopenten-1-yl)amino)methyl)-7-deazaguanosine). The sequence is that of Queuine tRNA-ribosyltransferase from Pediococcus pentosaceus (strain ATCC 25745 / CCUG 21536 / LMG 10740 / 183-1w).